A 130-amino-acid chain; its full sequence is MSATQNYGTGRRKTATARVFLRPGTGNISINNRSLDVFFGRETARMVVRQPLELTESVEKFDIYVTVSGGGVSGQAGAIRHGITRALMEYDETLRGALRRAGYVTRDAREVERKKVGLRKARKRPQYSKR.

It belongs to the universal ribosomal protein uS9 family.

This chain is Small ribosomal subunit protein uS9, found in Pseudomonas putida (strain ATCC 700007 / DSM 6899 / JCM 31910 / BCRC 17059 / LMG 24140 / F1).